The primary structure comprises 545 residues: Labda-7,13-dienyl diphosphate synthase (545 aa).

The DXDDTA motif motif lies at 315 to 320; the sequence is DADDTA. The RXXDGSW motif motif lies at 444-450; the sequence is RRTDGSW. The segment at 526–545 is disordered; the sequence is LPAPAPVPPGFDAARTGPAD.

This sequence belongs to the terpene synthase family. Mg(2+) is required as a cofactor.

It carries out the reaction (2E,6E,10E)-geranylgeranyl diphosphate = (13E)-labda-7,13-dien-15-yl diphosphate. In terms of biological role, involved in the biosynthesis of the labdane-type bicyclic diterpene labda-7,13(16),14-triene. Catalyzes the conversion of geranylgeranyl diphosphate (GGDP) into labda-7,13(E)-dienyl diphosphate. The sequence is that of Labda-7,13-dienyl diphosphate synthase from Streptomyces clavuligerus.